A 227-amino-acid polypeptide reads, in one-letter code: 7-cyano-7-deazaguanine synthase (227 aa).

ATP is bound at residue 7–17 (LSGGMDSLVTT). C187, C195, C198, and C201 together coordinate Zn(2+).

The protein belongs to the QueC family. It depends on Zn(2+) as a cofactor.

The catalysed reaction is 7-carboxy-7-deazaguanine + NH4(+) + ATP = 7-cyano-7-deazaguanine + ADP + phosphate + H2O + H(+). It functions in the pathway purine metabolism; 7-cyano-7-deazaguanine biosynthesis. In terms of biological role, catalyzes the ATP-dependent conversion of 7-carboxy-7-deazaguanine (CDG) to 7-cyano-7-deazaguanine (preQ(0)). The protein is 7-cyano-7-deazaguanine synthase of Chlorobium luteolum (strain DSM 273 / BCRC 81028 / 2530) (Pelodictyon luteolum).